Here is a 455-residue protein sequence, read N- to C-terminus: MGLSVVILAAGKGSRMNSNKPKVLQTLAAKTLIEHVVSSVEKLNPDNIVVVTGHLKEQVEDALQGRNITFVYQQQQLGTGHAVLQALPYLKEQKVLILYGDVPLISTEVLENLVDTTNDDDLGVLTAFVENPQGLGRIVRDKFGAVTEIVEEKDANDIQRQIKEINTGIYCVHKNLLQKWLPEIKANNVQKEYYLTDIITFAKADHVSINVTHPINEFEILGVNDRTQLASLERVWQRNVAEKIMAKGVSIADPNRFDVRGNLDVGKDCWIDINVIIKGNVKLGNNVVIGANCILKNCIIEDNVRIKSNSMVDGSIIREGAIVGPFARVRPECDVKEGAVIGNFVEAKKTILGKGSKASHLTYLGDSEIGANCNIGAGVITCNYDGVNKHKTVIGDYAFIGSDSQLIAPVNIGQGATVGAGSTIVKDVPADNLVISRARQRHIDTWQRSVKKTDK.

The interval 1–226 (MGLSVVILAA…EFEILGVNDR (226 aa)) is pyrophosphorylase. UDP-N-acetyl-alpha-D-glucosamine-binding positions include 8 to 11 (LAAG), Lys-22, Gln-73, 78 to 79 (GT), 99 to 101 (YGD), Gly-136, Glu-151, Asn-166, and Asn-224. Residue Asp-101 participates in Mg(2+) binding. Asn-224 contacts Mg(2+). The segment at 227 to 247 (TQLASLERVWQRNVAEKIMAK) is linker. The interval 248–455 (GVSIADPNRF…WQRSVKKTDK (208 aa)) is N-acetyltransferase. Residues Arg-330 and Lys-348 each coordinate UDP-N-acetyl-alpha-D-glucosamine. His-360 acts as the Proton acceptor in catalysis. Residues Tyr-363 and Asn-374 each coordinate UDP-N-acetyl-alpha-D-glucosamine. Residues Ala-377, 383–384 (NY), Ser-402, Ala-420, and Arg-437 each bind acetyl-CoA.

In the N-terminal section; belongs to the N-acetylglucosamine-1-phosphate uridyltransferase family. This sequence in the C-terminal section; belongs to the transferase hexapeptide repeat family. As to quaternary structure, homotrimer. Requires Mg(2+) as cofactor.

It localises to the cytoplasm. The enzyme catalyses alpha-D-glucosamine 1-phosphate + acetyl-CoA = N-acetyl-alpha-D-glucosamine 1-phosphate + CoA + H(+). It carries out the reaction N-acetyl-alpha-D-glucosamine 1-phosphate + UTP + H(+) = UDP-N-acetyl-alpha-D-glucosamine + diphosphate. Its pathway is nucleotide-sugar biosynthesis; UDP-N-acetyl-alpha-D-glucosamine biosynthesis; N-acetyl-alpha-D-glucosamine 1-phosphate from alpha-D-glucosamine 6-phosphate (route II): step 2/2. The protein operates within nucleotide-sugar biosynthesis; UDP-N-acetyl-alpha-D-glucosamine biosynthesis; UDP-N-acetyl-alpha-D-glucosamine from N-acetyl-alpha-D-glucosamine 1-phosphate: step 1/1. It functions in the pathway bacterial outer membrane biogenesis; LPS lipid A biosynthesis. In terms of biological role, catalyzes the last two sequential reactions in the de novo biosynthetic pathway for UDP-N-acetylglucosamine (UDP-GlcNAc). The C-terminal domain catalyzes the transfer of acetyl group from acetyl coenzyme A to glucosamine-1-phosphate (GlcN-1-P) to produce N-acetylglucosamine-1-phosphate (GlcNAc-1-P), which is converted into UDP-GlcNAc by the transfer of uridine 5-monophosphate (from uridine 5-triphosphate), a reaction catalyzed by the N-terminal domain. This is Bifunctional protein GlmU from Francisella tularensis subsp. tularensis (strain FSC 198).